Consider the following 556-residue polypeptide: 2-succinyl-5-enolpyruvyl-6-hydroxy-3-cyclohexene-1-carboxylate synthase (556 aa).

This sequence belongs to the TPP enzyme family. MenD subfamily. Homodimer. Mg(2+) serves as cofactor. It depends on Mn(2+) as a cofactor. Requires thiamine diphosphate as cofactor.

The catalysed reaction is isochorismate + 2-oxoglutarate + H(+) = 5-enolpyruvoyl-6-hydroxy-2-succinyl-cyclohex-3-ene-1-carboxylate + CO2. It functions in the pathway quinol/quinone metabolism; 1,4-dihydroxy-2-naphthoate biosynthesis; 1,4-dihydroxy-2-naphthoate from chorismate: step 2/7. Its pathway is quinol/quinone metabolism; menaquinone biosynthesis. Its function is as follows. Catalyzes the thiamine diphosphate-dependent decarboxylation of 2-oxoglutarate and the subsequent addition of the resulting succinic semialdehyde-thiamine pyrophosphate anion to isochorismate to yield 2-succinyl-5-enolpyruvyl-6-hydroxy-3-cyclohexene-1-carboxylate (SEPHCHC). The protein is 2-succinyl-5-enolpyruvyl-6-hydroxy-3-cyclohexene-1-carboxylate synthase of Salmonella dublin (strain CT_02021853).